The chain runs to 197 residues: uncharacterized protein (197 aa).

This is an uncharacterized protein from Methanocaldococcus jannaschii (strain ATCC 43067 / DSM 2661 / JAL-1 / JCM 10045 / NBRC 100440) (Methanococcus jannaschii).